A 188-amino-acid chain; its full sequence is Large ribosomal subunit protein uL6 (188 aa).

The protein belongs to the universal ribosomal protein uL6 family. Part of the 50S ribosomal subunit.

This protein binds to the 23S rRNA, and is important in its secondary structure. It is located near the subunit interface in the base of the L7/L12 stalk, and near the tRNA binding site of the peptidyltransferase center. The sequence is that of Large ribosomal subunit protein uL6 from Myxococcus xanthus (strain DK1622).